The following is a 728-amino-acid chain: Glutamate--cysteine ligase (728 aa).

The segment at 517–552 (PVRTTRRGGSASRSASGTSTPNSGSSRPATPPLGPV) is disordered. A compositionally biased stretch (low complexity) spans 523–536 (RGGSASRSASGTST).

The protein belongs to the glutamate--cysteine ligase type 3 family.

It catalyses the reaction L-cysteine + L-glutamate + ATP = gamma-L-glutamyl-L-cysteine + ADP + phosphate + H(+). Its pathway is sulfur metabolism; glutathione biosynthesis; glutathione from L-cysteine and L-glutamate: step 1/2. This chain is Glutamate--cysteine ligase (gcs-1), found in Neurospora crassa (strain ATCC 24698 / 74-OR23-1A / CBS 708.71 / DSM 1257 / FGSC 987).